We begin with the raw amino-acid sequence, 20 residues long: Phosphoglycerate kinase (20 aa).

The disordered stretch occupies residues 1–20; the sequence is MNKKSIRNVNLKGKRVFDRV.

The protein belongs to the phosphoglycerate kinase family. Monomer.

Its subcellular location is the cytoplasm. The enzyme catalyses (2R)-3-phosphoglycerate + ATP = (2R)-3-phospho-glyceroyl phosphate + ADP. It functions in the pathway carbohydrate degradation; glycolysis; pyruvate from D-glyceraldehyde 3-phosphate: step 2/5. This chain is Phosphoglycerate kinase, found in Bacillus cereus.